The chain runs to 130 residues: Large ribosomal subunit protein bL21 (130 aa).

The tract at residues alanine 103 to glutamate 130 is disordered. Positions serine 108–proline 120 are enriched in basic and acidic residues. Low complexity predominate over residues alanine 121–glutamate 130.

It belongs to the bacterial ribosomal protein bL21 family. As to quaternary structure, part of the 50S ribosomal subunit. Contacts protein L20.

This protein binds to 23S rRNA in the presence of protein L20. The polypeptide is Large ribosomal subunit protein bL21 (Methylorubrum extorquens (strain CM4 / NCIMB 13688) (Methylobacterium extorquens)).